The chain runs to 427 residues: UPF0229 protein bll6755 (427 aa).

A disordered region spans residues 86 to 107 (DYLQRSGQGSAKDSGPGEGDSE).

The protein belongs to the UPF0229 family.

The sequence is that of UPF0229 protein bll6755 from Bradyrhizobium diazoefficiens (strain JCM 10833 / BCRC 13528 / IAM 13628 / NBRC 14792 / USDA 110).